Here is a 649-residue protein sequence, read N- to C-terminus: PTS system mannitol-specific EIICBA component (649 aa).

The 330-residue stretch at 13-342 folds into the PTS EIIC type-2 domain; sequence FGRFLSNMVM…LLMKAQTSTE (330 aa). The next 6 helical transmembrane spans lie at 25–46, 51–71, 135–156, 166–186, 274–293, and 314–335; these read IGAF…WVPN, SLVG…TGGK, SAGI…PFVK, VNFL…EPAK, AIAG…AGLV, and LGVV…ALLM. The 92-residue stretch at 384–475 folds into the PTS EIIB type-2 domain; sequence QSIIVACDAG…LVTQLLAAKR (92 aa). Cys-390 functions as the Phosphocysteine intermediate; for EIIB activity in the catalytic mechanism. The residue at position 390 (Cys-390) is a Phosphocysteine; by EIIA. Residues 504-646 enclose the PTS EIIA type-2 domain; the sequence is FQLQKENIHL…SDVLSILATS (143 aa). His-564 functions as the Tele-phosphohistidine intermediate; for EIIA activity in the catalytic mechanism. His-564 carries the post-translational modification Phosphohistidine; by HPr.

Homodimer. An intramolecular phosphotransfer takes places between His-564 and Cys-390.

The protein resides in the cell inner membrane. The enzyme catalyses D-mannitol(out) + N(pros)-phospho-L-histidyl-[protein] = D-mannitol 1-phosphate(in) + L-histidyl-[protein]. The phosphoenolpyruvate-dependent sugar phosphotransferase system (sugar PTS), a major carbohydrate active transport system, catalyzes the phosphorylation of incoming sugar substrates concomitantly with their translocation across the cell membrane. This system is involved in D-mannitol transport. This chain is PTS system mannitol-specific EIICBA component (mtlA), found in Vibrio cholerae serotype O1 (strain ATCC 39315 / El Tor Inaba N16961).